Reading from the N-terminus, the 201-residue chain is Glycerol-3-phosphate acyltransferase (201 aa).

5 consecutive transmembrane segments (helical) span residues Met10–Leu30, Leu60–Ala80, Ala86–Phe106, Leu116–Val136, and Ala166–Ile186.

This sequence belongs to the PlsY family. As to quaternary structure, probably interacts with PlsX.

Its subcellular location is the cell inner membrane. The enzyme catalyses an acyl phosphate + sn-glycerol 3-phosphate = a 1-acyl-sn-glycero-3-phosphate + phosphate. The protein operates within lipid metabolism; phospholipid metabolism. Its function is as follows. Catalyzes the transfer of an acyl group from acyl-phosphate (acyl-PO(4)) to glycerol-3-phosphate (G3P) to form lysophosphatidic acid (LPA). This enzyme utilizes acyl-phosphate as fatty acyl donor, but not acyl-CoA or acyl-ACP. This chain is Glycerol-3-phosphate acyltransferase, found in Brucella abortus (strain 2308).